The chain runs to 633 residues: DEAD-box ATP-dependent RNA helicase 27 (633 aa).

The span at 1–17 (MANLDMEQHSSENEEIK) shows a compositional bias: basic and acidic residues. The disordered stretch occupies residues 1-147 (MANLDMEQHS…DKEEEKKLEE (147 aa)). Residues 2–34 (ANLDMEQHSSENEEIKKKKHKKRARDEAKKLKQ) adopt a coiled-coil conformation. Acidic residues-rich tracts occupy residues 37 to 47 (MEEEPDHEDGD) and 74 to 83 (DDGEDEAVAE). Over residues 88–97 (KKKKKNKKLQ) the composition is skewed to basic residues. Composition is skewed to acidic residues over residues 103-114 (NDEEDEVIAEEE) and 131-140 (SEEEEVEDKE). The stretch at 117-153 (KKKKKKQRKDTEAKSEEEEVEDKEEEKKLEETSIMTN) forms a coiled coil. The Q motif motif lies at 154–182 (KTFESLSLSDNTYKSIKEMGFARMTQIQA). Residues 185–360 (IPPLMMGEDV…RVSLTSPVYI (176 aa)) enclose the Helicase ATP-binding domain. 198 to 205 (ARTGSGKT) is a binding site for ATP. The short motif at 308-311 (DEAD) is the DEAD box element. Residues 386-534 (RLLFLLTFLK…EHEFEEKKLL (149 aa)) form the Helicase C-terminal domain. Residues 608–633 (KREPVNKFKRGRGGGRPGGKSKFERY) are disordered.

This sequence belongs to the DEAD box helicase family. DDX18/HAS1 subfamily.

It catalyses the reaction ATP + H2O = ADP + phosphate + H(+). The polypeptide is DEAD-box ATP-dependent RNA helicase 27 (RH27) (Arabidopsis thaliana (Mouse-ear cress)).